The sequence spans 490 residues: Bifunctional protein HldE (490 aa).

The interval 1–328 is ribokinase; it reads MFSFDALLQA…LRRRILPHAS (328 aa). 205-208 lines the ATP pocket; that stretch reads NRKE. The active site involves aspartate 275. The tract at residues 358–490 is cytidylyltransferase; that stretch reads FTNGCFDILH…LVARAREGQS (133 aa).

This sequence in the N-terminal section; belongs to the carbohydrate kinase PfkB family. In the C-terminal section; belongs to the cytidylyltransferase family. As to quaternary structure, homodimer.

It carries out the reaction D-glycero-beta-D-manno-heptose 7-phosphate + ATP = D-glycero-beta-D-manno-heptose 1,7-bisphosphate + ADP + H(+). The catalysed reaction is D-glycero-beta-D-manno-heptose 1-phosphate + ATP + H(+) = ADP-D-glycero-beta-D-manno-heptose + diphosphate. The protein operates within nucleotide-sugar biosynthesis; ADP-L-glycero-beta-D-manno-heptose biosynthesis; ADP-L-glycero-beta-D-manno-heptose from D-glycero-beta-D-manno-heptose 7-phosphate: step 1/4. It functions in the pathway nucleotide-sugar biosynthesis; ADP-L-glycero-beta-D-manno-heptose biosynthesis; ADP-L-glycero-beta-D-manno-heptose from D-glycero-beta-D-manno-heptose 7-phosphate: step 3/4. Functionally, catalyzes the phosphorylation of D-glycero-D-manno-heptose 7-phosphate at the C-1 position to selectively form D-glycero-beta-D-manno-heptose-1,7-bisphosphate. Catalyzes the ADP transfer from ATP to D-glycero-beta-D-manno-heptose 1-phosphate, yielding ADP-D-glycero-beta-D-manno-heptose. The polypeptide is Bifunctional protein HldE (Rhodopseudomonas palustris (strain TIE-1)).